Here is a 951-residue protein sequence, read N- to C-terminus: Cadmium/zinc-transporting ATPase HMA2 (951 aa).

At methionine 1–lysine 83 the chain is on the cytoplasmic side. An HMA domain is found at threonine 7–asparagine 73. A helical membrane pass occupies residues asparagine 84–tyrosine 105. Over leucine 106–serine 108 the chain is Extracellular. Residues proline 109–lysine 128 traverse the membrane as a helical segment. The Cytoplasmic portion of the chain corresponds to alanine 129–arginine 135. Residues phenylalanine 136–aspartate 156 traverse the membrane as a helical segment. Residue tyrosine 157 is a topological domain, extracellular. A helical membrane pass occupies residues threonine 158–serine 178. Over tyrosine 179–lysine 304 the chain is Cytoplasmic. A helical transmembrane segment spans residues cysteine 305–leucine 327. At lysine 328–tryptophan 335 the chain is on the extracellular side. Residues valine 336–leucine 353 traverse the membrane as a helical segment. Over serine 354 to valine 647 the chain is Cytoplasmic. The active-site 4-aspartylphosphate intermediate is the aspartate 391. Residues aspartate 592 and aspartate 596 each coordinate Mg(2+). The chain crosses the membrane as a helical span at residues valine 648–alanine 667. Over glycine 668–leucine 671 the chain is Extracellular. The chain crosses the membrane as a helical span at residues isoleucine 672–methionine 691. At leucine 692–glutamate 951 the chain is on the cytoplasmic side. Residues glutamate 841 to serine 851 show a composition bias toward basic and acidic residues. A disordered region spans residues glutamate 841–threonine 866.

It belongs to the cation transport ATPase (P-type) (TC 3.A.3) family. Type IB subfamily. Predominantly expressed in the vascular tissues of roots, stems, and leaves. Also detected in developing anthers.

It is found in the cell membrane. It carries out the reaction Zn(2+)(in) + ATP + H2O = Zn(2+)(out) + ADP + phosphate + H(+). The enzyme catalyses Cd(2+)(in) + ATP + H2O = Cd(2+)(out) + ADP + phosphate + H(+). Plays an important role in zinc transport and homeostasis. Could also be involved in cadmium detoxification. The sequence is that of Cadmium/zinc-transporting ATPase HMA2 (HMA2) from Arabidopsis thaliana (Mouse-ear cress).